The following is a 586-amino-acid chain: NADH-quinone oxidoreductase subunit C/D 2 (586 aa).

The segment at 1–173 (MKWVNKGTVE…RTDPPSHDFE (173 aa)) is NADH dehydrogenase I subunit C. The segment at 197-586 (AELVLNWGPL…LDPVVGETDR (390 aa)) is NADH dehydrogenase I subunit D.

This sequence in the N-terminal section; belongs to the complex I 30 kDa subunit family. The protein in the C-terminal section; belongs to the complex I 49 kDa subunit family. In terms of assembly, NDH-1 is composed of 13 different subunits. Subunits NuoB, CD, E, F, and G constitute the peripheral sector of the complex.

Its subcellular location is the cell inner membrane. It carries out the reaction a quinone + NADH + 5 H(+)(in) = a quinol + NAD(+) + 4 H(+)(out). Functionally, NDH-1 shuttles electrons from NADH, via FMN and iron-sulfur (Fe-S) centers, to quinones in the respiratory chain. The immediate electron acceptor for the enzyme in this species is believed to be ubiquinone. Couples the redox reaction to proton translocation (for every two electrons transferred, four hydrogen ions are translocated across the cytoplasmic membrane), and thus conserves the redox energy in a proton gradient. The sequence is that of NADH-quinone oxidoreductase subunit C/D 2 (nuoC2) from Aquifex aeolicus (strain VF5).